Reading from the N-terminus, the 507-residue chain is MVTIRADEISNIIRERIEQYNREVKVVNTGTVLQVGDGIARIHGLDEVMAGELVEFEEGTIGIALNLESNNVGVVLMGDGLLIQEGSSVKATGRIAQIPVSEAYLGRVINALAKPIDGRGEISASEFRLIESAAPGIISRRSVYEPLQTGLIAIDSMIPIGRGQRELIIGDRQTGKTAVATDTILNQQGQNVICVYVAIGQKASSVAQVVTTLQERGAMEYTIVVAETADSPATLQYLAPYTGAALAEYFMYRERHTLIIYDDPSKQAQAYRQMSLLLRRPPGREAYPGDVFYLHSRLLERAAKLSSSLGEGSMTALPIVETQSGDVSAYIPTNVISITDGQIFLSADLFNSGIRPAINVGISVSRVGSAAQIKAMKQVAGKLKLELAQFAELEAFAQFASDLDKATQNQLARGQRLRELLKQSQSAPLTVEEQIMTIYTGTNGYLDSLEVGQVRKFLVELRTYLKTNKPQFQEIISSTKTFTEEAEALLKEAIQEQTDRFILQEQA.

170-177 is a binding site for ATP; sequence GDRQTGKT.

Belongs to the ATPase alpha/beta chains family. In terms of assembly, F-type ATPases have 2 components, CF(1) - the catalytic core - and CF(0) - the membrane proton channel. CF(1) has five subunits: alpha(3), beta(3), gamma(1), delta(1), epsilon(1). CF(0) has four main subunits: a, b, b' and c.

Its subcellular location is the plastid. The protein resides in the chloroplast thylakoid membrane. The enzyme catalyses ATP + H2O + 4 H(+)(in) = ADP + phosphate + 5 H(+)(out). In terms of biological role, produces ATP from ADP in the presence of a proton gradient across the membrane. The alpha chain is a regulatory subunit. This is ATP synthase subunit alpha, chloroplastic from Nicotiana tomentosiformis (Tobacco).